Reading from the N-terminus, the 2513-residue chain is MNNFKNINLIEKGVAIVGIGFRIPSGNNENSISSPDDLFNNLKNGFDGVSSTSERWSDNFHKLGEISSPNAGLLPFNECKSFDPLFFGINPSEAPLIDPQQRLLLKCTWEALEDASIDPISIRGTNTSVFIGSSNIDYLHTNKHQDSVLKNVIAQSTCAISNRISYCFDFNGPSLSIDTACSSSLNAISQGYHSILNGTSDISIVGGVNLILDVETTKAYSYLSMLSKTHGKCKAFDESGDGFTRGECAGVVVLKNLQDAVKDGNRIYCVINGSSSNVDGNGNMDKVNFYSPSKQSQFNNINSAFKSTNEKLSVNEIQYIEAHGTGTKTGDPIETEAISMAFKNRDKSTPILIGSIKSNIGHCEAGSGVASLIKCCLMFKYQCFLPNIHFKNPNPLIKFNEWNLKVVTSPIPFNRKNEKPVSMMINNFGVTGSNCCLLISEFKKQDYEPYENNYKSNNKNILIPFSANSSNSLNQYQSKFKNIINNQFNFIDFTANQIYSKSNYLCQRSVIAASNSNELFEKILNKKQIQTKNSIISNMSFKGKNPITIFVFSGQGSQYPKMALELYNNEVIFKKSIDLINSKLSKYYGYSVLEKLRSIGDDDTTSIHDPNISQPAVCMISVSLFELYCHWGVNPSFILGHSLGEISASYCSGMIDLDTFCYTVYHRSIAQTKTHGNGRMLSINISDEEFKSMYSQKYPQIEIACYNSPQSIVVAGNESILNEISKELKEKEIFTAMLGSLSSFHTSSQQCTKDSVLKLNIQSNQPKVPIFSTVTTNLFNESNRFNSQYVYDNIINPVRFTQTISNIYKHIESNQLNNDIVFIEIAPHPTLSFYIKQMVPSSLNESVSVYSALHKKKNDVEEFQQTISNLYCQNGYNINFKCQFNNKKSNKKIDLPLYQWSDETYFAQTQTLEQHREEGPPIDHLGISNSFISPFNNSYKTLIDINNKPFQYLKGHMVKGKYYFPGCGYIDNIIQLYKNQDIFISFIEFKTPLILIEGINQCLQTNIQQTGKSEYRAQFHFKDQKSNQWTQSSNSNFQLLDHGNDIPSNYNIEEIIKNKCNLSKLTKNELYTHIKSKTGLNYTGVFKGVTECYIGDNCSLSVVSLESQTNSFLNIPILDTCLHGMLVLINDQCQIVFDKTIGFKYYSSNIPAYFKENKDCFYVYSHLKSKSADSYHGSIIVMLSDGSVLYEIQEVVCKSLIPIKDSLKIEYPNDELYKVHLQSKDSQIPTPSYFKSIIYENDSFHSIVNIPEDLFKYISTLFYKDIIKRCPEININKINSHSVNEIISSFSKISKHERLFRFVFETIKENGILNSLEENDDAYFEFNELVIKSSRIISKLLFPLENDNDNEDLPQSLFQNGLMDKFYKCNNFKKKNQIISHVIKHSIKEIINNNIIIRILEFGGGTASLSVEVIGEIVTLLQENPNYQVEIEYTWSDISPAFIADAKNKINKIINDAAITNGLNVIYLPLTIGESLIETQSIKPSYYDFVIMSNVLHVVKDIKQVVEQMYQLLTPNGQLVFVEPPYKSILIDSIVGSFDQWWSFTDTDIRKDRCGMSQQSWYQLLKTCNFKDIVMSKECIFGSVIQAQKPPISLLNSQPKHDNIIIYGGGNNSRFFENIKLYSNSKSLIQIETIQEFNQFINKSTITNDSIIYFIKTLETLSLDNFAQITLEYIEINKKLLQINSLCKHVLIVSDSRKTNYLASSVVGAARYFDEFQQLKLHTLDFDYDSTQNYINSKNNKMVQFINILTDSKTNVHKEMIIINNKVYYEIVQKEKNLKLKYNSESFENQNNLMCSLSPNLEYQLQSKQIKLRDNQVEVKTIATGINYKDYLNFSGSNSNGDDNTGLPQFGYEFSGIITRVGNNVKDYKVGDNVFGLSNSCTSSHIVTNFKNIQLKPSKISHIEASSIPIDYLASFISLFNVGSLNIEDNESILIHLGSDGFGLSTFEILKWKGFKSNLFVTVNSDETKQYLLDRYGDFISGIYSNTDKSYVTEIKNELIKLGSKKKGVDLILNTLPSDFMDSNFELLTKNARIIDLTSNHLNQSEFLKNINFKYNHSYHNFQLSLFQKNKIQKCLNEISNAIENGELKTIPIKEFTNLNIKDAIKYITNGNIEKITVSHDHEIYSDIIYRYLDEKEFSILKSNYQINSNNLGKNILITGQSGIILEILKWIIKYSNINTIENVIILSRSSLKWELELLINQTKLSNNNIKFHFKSIDVGDSEQVDNAINEILNENQQITNIDSIYHFAFQQITCKVQEINMKHLDISHGAKSMGAINLHNQSIKRNWKLINFVMASSAISLIGSTDLCTYACANTLLDSFSKYRVSLGLPSACINFGSIESTGFVSKNESVSVFLDGGGFHPTPINQVLGLLDLQIQNSGKFTNSMLSNFKPSKFKNNQQISLFLKFDYLMNLKNNSEQTKKENIGNKNIDELFIEKVSELFSTDESKINKNLRLIDYGADSLIIVQLKNWIDKEIGINLITIQQLQNNTINISIKMILNSLMKNNQCGREI.

A Ketosynthase family 3 (KS3) domain is found at 11-441 (EKGVAIVGIG…GSNCCLLISE (431 aa)). Catalysis depends on for beta-ketoacyl synthase activity residues Cys181, His323, and His362. Positions 632-665 (GVNPSFILGHSLGEISASYCSGMIDLDTFCYTVY) are acyl/malonyl transferase. Ser642 functions as the For acyl/malonyl transferase activity in the catalytic mechanism. Residues 922 to 1044 (IDHLGISNSF…SNFQLLDHGN (123 aa)) form an N-terminal hotdog fold region. The region spanning 922-1206 (IDHLGISNSF…CKSLIPIKDS (285 aa)) is the PKS/mFAS DH domain. Residue His956 is the Proton acceptor; for dehydratase activity of the active site. Residues 1061–1206 (NLSKLTKNEL…CKSLIPIKDS (146 aa)) are C-terminal hotdog fold. Asp1119 functions as the Proton donor; for dehydratase activity in the catalytic mechanism. Positions 2426-2503 (IGNKNIDELF…ISIKMILNSL (78 aa)) constitute a Carrier domain. Ser2463 carries the post-translational modification O-(pantetheine 4'-phosphoryl)serine.

Requires pantetheine 4'-phosphate as cofactor.

Its function is as follows. Probable polyketide synthase. The sequence is that of Probable polyketide synthase 7 (pks7) from Dictyostelium discoideum (Social amoeba).